The following is a 465-amino-acid chain: Phosphatidylserine synthase 1 (465 aa).

Residues 1-35 lie on the Cytoplasmic side of the membrane; the sequence is MATTFRSQTLSKDDVNYRMHFRMINEQQVEDITIQ. Residues 36–56 traverse the membrane as a helical segment; sequence FFYKPHTISLLTVTVLSLMYF. The Lumenal portion of the chain corresponds to 57–70; it reads AFTRDDGDPDSNLR. The chain crosses the membrane as a helical span at residues 71 to 91; that stretch reads VGLILLVSFFLVISVLAFPNG. The Cytoplasmic portion of the chain corresponds to 92 to 102; it reads PFTRPHPAIWR. Residues 103–123 form a helical membrane-spanning segment; the sequence is IVFGLSVLYFLFLVFIIFLNW. Residues 124 to 286 lie on the Lumenal side of the membrane; it reads DQVKALMFWL…WLDPKSSLQR (163 aa). The chain crosses the membrane as a helical span at residues 287–307; that stretch reads VMGVYLFMIIWQLTELNTFFL. Residues 308-309 lie on the Cytoplasmic side of the membrane; it reads KH. Residues 310–330 form a helical membrane-spanning segment; that stretch reads IFVFPACHALSWCRILFIGII. The Lumenal portion of the chain corresponds to 331-355; that stretch reads TAPTVRQYYAYLTDTQCKRVGTQCW. A helical membrane pass occupies residues 356–376; sequence VFGAIAFLEALACIKFGQDLF. Topologically, residues 377-380 are cytoplasmic; it reads SKTQ. A helical membrane pass occupies residues 381–401; sequence ILYVILWLVCLAFITFLCLYV. At 402–465 the chain is on the lumenal side; the sequence is MVWYAENYGP…DSRTINGMEK (64 aa). A disordered region spans residues 446–465; sequence CSTRKRRDSGDSRTINGMEK.

It belongs to the phosphatidyl serine synthase family.

The protein localises to the endoplasmic reticulum membrane. The catalysed reaction is a 1,2-diacyl-sn-glycero-3-phosphoethanolamine + L-serine = a 1,2-diacyl-sn-glycero-3-phospho-L-serine + ethanolamine. It catalyses the reaction a 1,2-diacyl-sn-glycero-3-phosphocholine + L-serine = a 1,2-diacyl-sn-glycero-3-phospho-L-serine + choline. It functions in the pathway phospholipid metabolism; phosphatidylserine biosynthesis. Catalyzes a base-exchange reaction in which the polar head group of phosphatidylethanolamine (PE) or phosphatidylcholine (PC) is replaced by L-serine. Catalyzes mainly the conversion of phosphatidylcholine but also converts, in vitro and to a lesser extent, phosphatidylethanolamine. This is Phosphatidylserine synthase 1 (ptdss1) from Danio rerio (Zebrafish).